The sequence spans 260 residues: Acetylglutamate kinase (260 aa).

Residues 45–46, R67, and N159 each bind substrate; that span reads GG.

It belongs to the acetylglutamate kinase family. ArgB subfamily.

The protein localises to the cytoplasm. The enzyme catalyses N-acetyl-L-glutamate + ATP = N-acetyl-L-glutamyl 5-phosphate + ADP. It participates in amino-acid biosynthesis; L-arginine biosynthesis; N(2)-acetyl-L-ornithine from L-glutamate: step 2/4. Its function is as follows. Catalyzes the ATP-dependent phosphorylation of N-acetyl-L-glutamate. The protein is Acetylglutamate kinase of Colwellia psychrerythraea (strain 34H / ATCC BAA-681) (Vibrio psychroerythus).